The primary structure comprises 437 residues: uncharacterized protein (437 aa).

The next 2 membrane-spanning stretches (helical) occupy residues 102–122 (GIYM…PVII) and 272–292 (ILSI…ATVW).

This sequence belongs to the herpesviridae UL49 family.

The protein localises to the host membrane. This is an uncharacterized protein from Connochaetes taurinus (Blue wildebeest).